A 454-amino-acid polypeptide reads, in one-letter code: Chromosomal replication initiator protein DnaA (454 aa).

The tract at residues 1 to 76 is domain I, interacts with DnaA modulators; the sequence is MNKLKTDLNL…IGASFRILAK (76 aa). Positions 76-113 are domain II; the sequence is KNPKIIFAQESPGNGEKATGKKIKSLPREDKSSIFESK. Positions 114-330 are domain III, AAA+ region; it reads GLNTKFSFEN…GALNRLCAYA (217 aa). Gly158, Gly160, Lys161, and Thr162 together coordinate ATP. A domain IV, binds dsDNA region spans residues 331 to 454; it reads SIHKEGKITL…KITEQLTSSQ (124 aa).

Belongs to the DnaA family. Oligomerizes as a right-handed, spiral filament on DNA at oriC.

The protein resides in the cytoplasm. Plays an essential role in the initiation and regulation of chromosomal replication. ATP-DnaA binds to the origin of replication (oriC) to initiate formation of the DNA replication initiation complex once per cell cycle. Binds the DnaA box (a 9 base pair repeat at the origin) and separates the double-stranded (ds)DNA. Forms a right-handed helical filament on oriC DNA; dsDNA binds to the exterior of the filament while single-stranded (ss)DNA is stabiized in the filament's interior. The ATP-DnaA-oriC complex binds and stabilizes one strand of the AT-rich DNA unwinding element (DUE), permitting loading of DNA polymerase. After initiation quickly degrades to an ADP-DnaA complex that is not apt for DNA replication. Binds acidic phospholipids. The protein is Chromosomal replication initiator protein DnaA of Methylacidiphilum infernorum (isolate V4) (Methylokorus infernorum (strain V4)).